The primary structure comprises 365 residues: uncharacterized protein (365 aa).

It belongs to the NAD(P)-dependent epimerase/dehydratase family.

The protein resides in the cytoplasm. It is found in the nucleus. This is an uncharacterized protein from Schizosaccharomyces pombe (strain 972 / ATCC 24843) (Fission yeast).